Reading from the N-terminus, the 145-residue chain is Cell division protein SepF (145 aa).

The protein belongs to the SepF family. In terms of assembly, homodimer. Interacts with FtsZ.

It localises to the cytoplasm. Cell division protein that is part of the divisome complex and is recruited early to the Z-ring. Probably stimulates Z-ring formation, perhaps through the cross-linking of FtsZ protofilaments. Its function overlaps with FtsA. This Lactobacillus helveticus (strain DPC 4571) protein is Cell division protein SepF.